A 512-amino-acid polypeptide reads, in one-letter code: Cytokinin hydroxylase (512 aa).

Residues 2 to 22 form a helical membrane-spanning segment; the sequence is MVTLVLKYVLVIVMTLILRVL. Position 458 (C458) interacts with heme.

It belongs to the cytochrome P450 family. The cofactor is heme. In terms of tissue distribution, specifically expressed in roots.

It is found in the membrane. It catalyses the reaction N(6)-(dimethylallyl)adenosine 5'-phosphate + NADPH + O2 + H(+) = 9-ribosyl-trans-zeatin 5'-phosphate + NADP(+) + H2O. The enzyme catalyses N(6)-(dimethylallyl)adenosine 5'-diphosphate + NADPH + O2 + H(+) = 9-ribosyl-trans-zeatin 5'-diphosphate + NADP(+) + H2O. It carries out the reaction N(6)-(dimethylallyl)adenosine 5'-triphosphate + NADPH + O2 + H(+) = 9-ribosyl-trans-zeatin 5'-triphosphate + NADP(+) + H2O. Functionally, cytokinin hydroxylase that catalyzes the biosynthesis of trans-zeatin via the isopentenyladenine riboside 5'-monophosphate (iPRMP)-dependent pathway. Can use isopentenyladenosine-5'-monophosphate, isopentenyladenosine-5'-diphosphate and isopentenyladenosine-5'-triphosphate as substrate. The sequence is that of Cytokinin hydroxylase (CYP735A2) from Arabidopsis thaliana (Mouse-ear cress).